Consider the following 255-residue polypeptide: Indole-3-glycerol phosphate synthase (255 aa).

The protein belongs to the TrpC family.

The enzyme catalyses 1-(2-carboxyphenylamino)-1-deoxy-D-ribulose 5-phosphate + H(+) = (1S,2R)-1-C-(indol-3-yl)glycerol 3-phosphate + CO2 + H2O. It functions in the pathway amino-acid biosynthesis; L-tryptophan biosynthesis; L-tryptophan from chorismate: step 4/5. In Streptococcus thermophilus (strain ATCC BAA-250 / LMG 18311), this protein is Indole-3-glycerol phosphate synthase.